A 188-amino-acid polypeptide reads, in one-letter code: NADH-quinone oxidoreductase subunit I 2 (188 aa).

4Fe-4S ferredoxin-type domains lie at 56–88 and 98–127; these read HFLK…VVPY and AKFE…LGQQ. The [4Fe-4S] cluster site is built by Cys68, Cys71, Cys74, Cys78, Cys107, Cys110, Cys113, and Cys117.

The protein belongs to the complex I 23 kDa subunit family. As to quaternary structure, NDH-1 is composed of 14 different subunits. Subunits NuoA, H, J, K, L, M, N constitute the membrane sector of the complex. [4Fe-4S] cluster is required as a cofactor.

Its subcellular location is the cell inner membrane. It catalyses the reaction a quinone + NADH + 5 H(+)(in) = a quinol + NAD(+) + 4 H(+)(out). Its function is as follows. NDH-1 shuttles electrons from NADH, via FMN and iron-sulfur (Fe-S) centers, to quinones in the respiratory chain. The immediate electron acceptor for the enzyme in this species is believed to be ubiquinone. Couples the redox reaction to proton translocation (for every two electrons transferred, four hydrogen ions are translocated across the cytoplasmic membrane), and thus conserves the redox energy in a proton gradient. This is NADH-quinone oxidoreductase subunit I 2 from Rhizobium etli (strain ATCC 51251 / DSM 11541 / JCM 21823 / NBRC 15573 / CFN 42).